The primary structure comprises 508 residues: Lysine--tRNA ligase (508 aa).

Mg(2+) is bound by residues glutamate 418 and glutamate 425.

Belongs to the class-II aminoacyl-tRNA synthetase family. As to quaternary structure, homodimer. Mg(2+) is required as a cofactor.

The protein localises to the cytoplasm. It carries out the reaction tRNA(Lys) + L-lysine + ATP = L-lysyl-tRNA(Lys) + AMP + diphosphate. In Burkholderia multivorans (strain ATCC 17616 / 249), this protein is Lysine--tRNA ligase.